Here is a 336-residue protein sequence, read N- to C-terminus: Ferredoxin--NADP reductase 1 (336 aa).

The FAD site is built by glutamate 37, lysine 45, phenylalanine 50, valine 90, leucine 125, aspartate 287, and threonine 328.

Belongs to the ferredoxin--NADP reductase type 2 family. As to quaternary structure, homodimer. Requires FAD as cofactor.

It catalyses the reaction 2 reduced [2Fe-2S]-[ferredoxin] + NADP(+) + H(+) = 2 oxidized [2Fe-2S]-[ferredoxin] + NADPH. The sequence is that of Ferredoxin--NADP reductase 1 (ycgT) from Bacillus subtilis (strain 168).